Reading from the N-terminus, the 357-residue chain is Adenylate isopentenyltransferase 1, chloroplastic (357 aa).

The transit peptide at 1 to 71 directs the protein to the chloroplast; that stretch reads MTELNFHLLP…NRKDKVVVIL (71 aa). Residues 20-39 are compositionally biased toward low complexity; sequence TTTSPSFSSHSSSSSSLLSF. The segment at 20–58 is disordered; it reads TTTSPSFSSHSSSSSSLLSFTKRRRKHQPLVSSIRMEQS. ATP is bound at residue 72–79; the sequence is GATGAGKS.

This sequence belongs to the IPP transferase family. Expressed in the vascular stele of the roots, in the xylem precursor cell files in the root tip, in leaf axils, ovules, and immature seeds.

It is found in the plastid. The protein localises to the chloroplast. It carries out the reaction dimethylallyl diphosphate + AMP = N(6)-(dimethylallyl)adenosine 5'-phosphate + diphosphate. The catalysed reaction is dimethylallyl diphosphate + ADP = N(6)-(dimethylallyl)adenosine 5'-diphosphate + diphosphate. The enzyme catalyses dimethylallyl diphosphate + ATP = N(6)-(dimethylallyl)adenosine 5'-triphosphate + diphosphate. Functionally, involved in cytokinin biosynthesis. Catalyzes the transfer of an isopentenyl group from dimethylallyl diphosphate (DMAPP) to ATP, ADP and AMP. Adenine, adenosine, isopentenylpyrophosphate and 1-hydroxy-2-methyl-2-(E)-butenyl 4-diphosphate (HMBDP) are not used as substrates. This is Adenylate isopentenyltransferase 1, chloroplastic (IPT1) from Arabidopsis thaliana (Mouse-ear cress).